Reading from the N-terminus, the 191-residue chain is Protein Ves (191 aa).

Belongs to the Ves family.

This is Protein Ves from Escherichia coli (strain UTI89 / UPEC).